The sequence spans 245 residues: 14-3-3 protein zeta/delta (245 aa).

Residue Met1 is modified to N-acetylmethionine. Lys3 is modified (N6-acetyllysine). Residue Ser58 is modified to Phosphoserine; by PKA. Lys68 carries the N6-acetyllysine modification. A phosphoserine mark is found at Ser184, Ser207, and Ser210. The residue at position 232 (Thr232) is a Phosphothreonine; by CK1.

Belongs to the 14-3-3 family. Homodimer. Heterodimerizes with YWHAE. Homo- and heterodimerization is inhibited by phosphorylation on Ser-58. Interacts with FOXO4, NOXA1, SSH1 ARHGEF2, CDK16 and BSPRY. Interacts with WEE1 (C-terminal). Interacts with MLF1 (phosphorylated form); the interaction retains it in the cytoplasm. Interacts with BAX; the interaction occurs in the cytoplasm. Under stress conditions, MAPK8-mediated phosphorylation releases BAX to mitochondria. Interacts with TP53; the interaction enhances p53 transcriptional activity. The Ser-58 phosphorylated form inhibits this interaction and p53 transcriptional activity. Interacts with ABL1 (phosphorylated form); the interaction retains ABL1 in the cytoplasm. Interacts with PKA-phosphorylated AANAT; the interaction modulates AANAT enzymatic activity by increasing affinity for arylalkylamines and acetyl-CoA and protecting the enzyme from dephosphorylation and proteasomal degradation. It may also prevent thiol-dependent inactivation. Interacts with AKT1; the interaction phosphorylates YWHAZ and modulates dimerization. Interacts with GAB2. Interacts with BCL2L11, SAMSN1 and TLK2. Interacts with phosphorylated RAF1; the interaction is inhibited when YWHAZ is phosphorylated on Thr-232. Interacts with Thr-phosphorylated ITGB2. Interacts with the 'Thr-369' phosphorylated form of DAPK2. Interacts with PI4KB, TBC1D22A and TBC1D22B. Interacts with ZFP36L1 (via phosphorylated form); this interaction occurs in a p38 MAPK- and AKT-signaling pathways. Interacts with SLITRK1. Interacts with AK5, LDB1, MADD, MARK3, PDE1A and SMARCB1. Interacts with YWHAZ. Interacts with MEFV. Interacts with ADAM22 (via C-terminus). The delta, brain-specific form differs from the zeta form in being phosphorylated. Phosphorylation on Ser-184 by MAPK8; promotes dissociation of BAX and translocation of BAX to mitochondria. Phosphorylation on Thr-232; inhibits binding of RAF1. Phosphorylated on Ser-58 by PKA and protein kinase C delta type catalytic subunit in a sphingosine-dependent fashion. Phosphorylation on Ser-58 by PKA; disrupts homodimerization and heterodimerization with YHAE and TP53.

Its subcellular location is the cytoplasm. It localises to the melanosome. In terms of biological role, adapter protein implicated in the regulation of a large spectrum of both general and specialized signaling pathways. Binds to a large number of partners, usually by recognition of a phosphoserine or phosphothreonine motif. Binding generally results in the modulation of the activity of the binding partner. Promotes cytosolic retention and inactivation of TFEB transcription factor by binding to phosphorylated TFEB. Induces ARHGEF7 activity on RAC1 as well as lamellipodia and membrane ruffle formation. In neurons, regulates spine maturation through the modulation of ARHGEF7 activity. This chain is 14-3-3 protein zeta/delta (YWHAZ), found in Bos taurus (Bovine).